The sequence spans 294 residues: tRNA-cytidine(32) 2-sulfurtransferase (294 aa).

The PP-loop motif motif lies at serine 70 to serine 75. Cysteine 145, cysteine 148, and cysteine 236 together coordinate [4Fe-4S] cluster.

The protein belongs to the TtcA family. Homodimer. Mg(2+) serves as cofactor. [4Fe-4S] cluster is required as a cofactor.

It localises to the cytoplasm. It catalyses the reaction cytidine(32) in tRNA + S-sulfanyl-L-cysteinyl-[cysteine desulfurase] + AH2 + ATP = 2-thiocytidine(32) in tRNA + L-cysteinyl-[cysteine desulfurase] + A + AMP + diphosphate + H(+). It functions in the pathway tRNA modification. Catalyzes the ATP-dependent 2-thiolation of cytidine in position 32 of tRNA, to form 2-thiocytidine (s(2)C32). The sulfur atoms are provided by the cysteine/cysteine desulfurase (IscS) system. The protein is tRNA-cytidine(32) 2-sulfurtransferase of Rhizobium meliloti (strain 1021) (Ensifer meliloti).